We begin with the raw amino-acid sequence, 196 residues long: MNRTKIVLATSNKGKVKEMADVLSAFGFEVIAQSEFGLVSPPETGLTFVENALLKARYASKMTGLPAIADDSGLAVDALAGAPGLYSARYAGIEDDDTANRRKLLAEMQNVPDGQRAAKFVSCIVMLKHETDPTPKIAFGECFGEILREERGQNGFGYDALFFYPAKQCTFAELDSTEKKQISHRALALVALQKQL.

10-15 (TSNKGK) is a substrate binding site. The active-site Proton acceptor is the D71. D71 contacts Mg(2+). Substrate is bound by residues S72, 156–159 (FGYD), K179, and 184–185 (HR).

The protein belongs to the HAM1 NTPase family. In terms of assembly, homodimer. The cofactor is Mg(2+).

It catalyses the reaction XTP + H2O = XMP + diphosphate + H(+). The enzyme catalyses dITP + H2O = dIMP + diphosphate + H(+). The catalysed reaction is ITP + H2O = IMP + diphosphate + H(+). Its function is as follows. Pyrophosphatase that catalyzes the hydrolysis of nucleoside triphosphates to their monophosphate derivatives, with a high preference for the non-canonical purine nucleotides XTP (xanthosine triphosphate), dITP (deoxyinosine triphosphate) and ITP. Seems to function as a house-cleaning enzyme that removes non-canonical purine nucleotides from the nucleotide pool, thus preventing their incorporation into DNA/RNA and avoiding chromosomal lesions. This is dITP/XTP pyrophosphatase from Haemophilus ducreyi (strain 35000HP / ATCC 700724).